We begin with the raw amino-acid sequence, 783 residues long: Protein phosphatase 2C 29 (783 aa).

Residues 151–194 (SFSALPLQPGPDRSGLFMSGPIERGATSGPLDPPAGEISRSNSA) are disordered. Ser-199 carries the post-translational modification Phosphoserine. The PPM-type phosphatase domain occupies 260-770 (SSGENDLQWA…DDCTVLVIAL (511 aa)). Residues Asp-295 and Gly-296 each coordinate Mn(2+). The segment at 555–595 (ETGESVETAERVEERRNDLDRDDGNKEPLVVDSSDSTVNNE) is disordered. Residues 562–580 (TAERVEERRNDLDRDDGNK) show a composition bias toward basic and acidic residues. Asp-701 and Asp-761 together coordinate Mn(2+).

This sequence belongs to the PP2C family. It depends on Mg(2+) as a cofactor. Mn(2+) serves as cofactor. As to expression, expressed in roots, leaves, stems, inflorescences, flowers and developing vascular tissue.

It is found in the nucleus. It catalyses the reaction O-phospho-L-seryl-[protein] + H2O = L-seryl-[protein] + phosphate. It carries out the reaction O-phospho-L-threonyl-[protein] + H2O = L-threonyl-[protein] + phosphate. Its function is as follows. Involved in the regulation of pedicel length and of CLAVATA pathways controlling stem cell identity at shoot and flower meristems. This is Protein phosphatase 2C 29 (PLL1) from Arabidopsis thaliana (Mouse-ear cress).